A 513-amino-acid polypeptide reads, in one-letter code: Lysine--tRNA ligase (513 aa).

A compositionally biased stretch (polar residues) spans 1–11 (MTEPTQPNAAQ). Residues 1–22 (MTEPTQPNAAQPNVVPEVDDNK) are disordered. The Mg(2+) site is built by Glu-423 and Glu-430.

It belongs to the class-II aminoacyl-tRNA synthetase family. In terms of assembly, homodimer. It depends on Mg(2+) as a cofactor.

The protein resides in the cytoplasm. The enzyme catalyses tRNA(Lys) + L-lysine + ATP = L-lysyl-tRNA(Lys) + AMP + diphosphate. The chain is Lysine--tRNA ligase from Paraburkholderia xenovorans (strain LB400).